We begin with the raw amino-acid sequence, 404 residues long: DNA gyrase subunit B (404 aa).

Residues 321–404 form the Toprim domain; the sequence is SEIYIVEGDS…VIIMTDADVD (84 aa). Mg(2+) is bound by residues glutamate 327, aspartate 400, and aspartate 402.

The protein belongs to the type II topoisomerase GyrB family. In terms of assembly, heterotetramer, composed of two GyrA and two GyrB chains. In the heterotetramer, GyrA contains the active site tyrosine that forms a transient covalent intermediate with DNA, while GyrB binds cofactors and catalyzes ATP hydrolysis. It depends on Mg(2+) as a cofactor. Requires Mn(2+) as cofactor. The cofactor is Ca(2+).

The protein localises to the cytoplasm. It catalyses the reaction ATP-dependent breakage, passage and rejoining of double-stranded DNA.. Its function is as follows. A type II topoisomerase that negatively supercoils closed circular double-stranded (ds) DNA in an ATP-dependent manner to modulate DNA topology and maintain chromosomes in an underwound state. Negative supercoiling favors strand separation, and DNA replication, transcription, recombination and repair, all of which involve strand separation. Also able to catalyze the interconversion of other topological isomers of dsDNA rings, including catenanes and knotted rings. Type II topoisomerases break and join 2 DNA strands simultaneously in an ATP-dependent manner. This Bacillus mycoides protein is DNA gyrase subunit B (gyrB).